The sequence spans 192 residues: Xanthine phosphoribosyltransferase (192 aa).

Residues Leu20 and Asn27 each coordinate xanthine. Position 128–132 (128–132) interacts with 5-phospho-alpha-D-ribose 1-diphosphate; sequence AHGEA. Position 156 (Lys156) interacts with xanthine.

Belongs to the purine/pyrimidine phosphoribosyltransferase family. Xpt subfamily. Homodimer.

It localises to the cytoplasm. It catalyses the reaction XMP + diphosphate = xanthine + 5-phospho-alpha-D-ribose 1-diphosphate. It participates in purine metabolism; XMP biosynthesis via salvage pathway; XMP from xanthine: step 1/1. Converts the preformed base xanthine, a product of nucleic acid breakdown, to xanthosine 5'-monophosphate (XMP), so it can be reused for RNA or DNA synthesis. This chain is Xanthine phosphoribosyltransferase, found in Lactobacillus gasseri (strain ATCC 33323 / DSM 20243 / BCRC 14619 / CIP 102991 / JCM 1131 / KCTC 3163 / NCIMB 11718 / NCTC 13722 / AM63).